Reading from the N-terminus, the 920-residue chain is MNAQLDGLSVSSSSTGSLGSAAAAAGGGGGAGLRLLSANVRQLHQALTALLSEPEREQFTHCLNAYHARRNVFDLVRTLRVLLDSPVKRRLLPMLRLVIPRSDQLLFDQYTAEGLYLPATTPYRQPAWAAPDGAGPGEVRLVSLRRAKAHEGLGFSIRGGSEHGVGIYVSLVEPGSLAEKEGLRVGDQILRVNDKSLARVTHAEAVKALKGSKKLVLSVYSAGRIPGGYVTNHIYTWVDPQGRSTSPPSSLPHGSTLRQHEDDRRSALHLLQSGDEKKVNLVLGDGRSLGLTIRGGAEYGLGIYITGVDPGSEAESSGLKVGDQILEVNGRSFLSILHDEAVKLLKSSRHLILTVKDVGRLPHARTTVDQTKWIASSRIGESITNSAGFPGDLTEEGTNKPGFYKGPAGSQVTLSSLGNQTRALLDDQARHLLTEQERATMMYYLDQYRGGTISVEALVMALFELLNTHAKFSLLSEVRGIISPQDLDRFDHLVLRREIESMKARQPPGPGVGDTYSMVSYSDTGSSTGSHGTSTTVSSARERLLWLIDLMENTLDLEGTCETTQGSTNALPDVSVDDVRSPSEDLPGIKPPPPPPPLAQGHDRLLGQTRKPVREDSAPLSSAAHSGIVFSAPRNRSPPPPPGIAPTPTPGPSSARDSPSSPIYASISHANPSSRKPLDTHLALVNQHPIGPFPRVQSPPHLKSPPAEAPGAGACLPPPSPSEHADAMGANQHFVLVEVHRPDSEPDVNEVRALPQTRTASTLSQLSDSGQTLSEDSGVDAGETEASTSGRGRQTANTKNKNGKELPQTERTTEGANKPPGLLEPTSTLIRVRKSAATLGIAIEGGANTRQPLPRIVTIQRGGSAHNCGQLKVGHVILEVNGQTLRGKEHREAARVIAEAFKTKERDYIDFLVTEFNVML.

One can recognise a PDZ 1 domain in the interval 141 to 224 (LVSLRRAKAH…LVLSVYSAGR (84 aa)). Residues 241-262 (QGRSTSPPSSLPHGSTLRQHED) form a disordered region. Positions 242-257 (GRSTSPPSSLPHGSTL) are enriched in polar residues. The region spanning 278–360 (KVNLVLGDGR…LILTVKDVGR (83 aa)) is the PDZ 2 domain. Disordered stretches follow at residues 502–536 (MKARQPPGPGVGDTYSMVSYSDTGSSTGSHGTSTT), 561–603 (CETT…QGHD), 630–730 (FSAP…AMGA), and 752–828 (RALP…PTST). The span at 520–536 (SYSDTGSSTGSHGTSTT) shows a compositional bias: low complexity. Over residues 561 to 570 (CETTQGSTNA) the composition is skewed to polar residues. Composition is skewed to pro residues over residues 589–598 (IKPPPPPPPL) and 636–651 (RSPPPPPGIAPTPTPG). Positions 655 to 674 (ARDSPSSPIYASISHANPSS) are enriched in polar residues. At Ser-698 the chain carries Phosphoserine. Composition is skewed to polar residues over residues 756–775 (QTRTASTLSQLSDSGQTLSE) and 785–800 (EASTSGRGRQTANTKN). Basic and acidic residues predominate over residues 802-813 (NGKELPQTERTT). The 84-residue stretch at 829 to 912 (LIRVRKSAAT…TKERDYIDFL (84 aa)) folds into the PDZ 3 domain.

In terms of assembly, forms homooligomers. Interacts (via C-terminal PDZ domain) with MYO15A; this interaction is necessary for localization of WHRN to stereocilia tips. Interacts (via C-terminal PDZ domain) with MPP1/p55. Interacts with LRRC4C/NGL1. Interacts with MYO7A. Interacts with RPGR. Interacts with EPS8. Interacts with CASK. Interacts with CIB2. Component of USH2 complex, composed of ADGRV1, PDZD7, USH2A and WHRN. Interacts (via PDZ domains) with PDZD7; the interaction is direct. Interacts (via N-terminal PDZ domain) with USH2A (via cytoplasmic region). Interacts with ADGRV1/MASS1 (via cytoplasmic region). As to expression, ubiquitous. Highly expressed in heart, spleen, lung and liver. Highly expressed in brain, in the olfactory bulb, thalamus, layers III-V of the cerebral cortex and the molecular layer of cerebellum. Detected in soma and dendrites of thalamic neurons, and in cerebrum in cell bodies and apical dendrites of pyramidal neurons. Expressed in retina and inner ear.

It localises to the cytoplasm. The protein resides in the cell projection. It is found in the stereocilium. The protein localises to the growth cone. Its subcellular location is the synapse. Functionally, involved in hearing and vision as member of the USH2 complex. Necessary for elongation and maintenance of inner and outer hair cell stereocilia in the organ of Corti in the inner ear. Involved in the maintenance of the hair bundle ankle region, which connects stereocilia in cochlear hair cells of the inner ear. In retina photoreceptors, required for the maintenance of periciliary membrane complex that seems to play a role in regulating intracellular protein transport. This is Whirlin from Rattus norvegicus (Rat).